A 376-amino-acid chain; its full sequence is MSGKMNEWESLNTTLNRFTDNVVKFRRDSRTKALKCWRPIVDGIVDYVKRKDDRFHALSVFHKGSYYERSKVGEPDEFDLMLVMDNLELYDEPFEEDDGLSEPPIGFTTVMIDQGEEKPWKRDECVNRRGMLNATRVKAVFKRLADEAIQDMKSKGHWRNVTVKSGGTAVTLKISKDGREYSVDLTLGIKDNTWPEDAEEWKTRQRKGWPKRNLVHDIHEMGCHLVTKQPKGHSPIEQERGFLWCYSFSEAEKKLFLQGEQGEVNSCRRQVLRILKALREELELQPLKSYHLKTLLLYECESQPSARQWSKDALSERFLDLLKRLEKCLRSKECPHYFIKDLNLFEMLNPEKCDELADRVNKILKQPGQVLIRLIK.

2 residues coordinate Mg(2+): Glu77 and Asp79.

It belongs to the mab-21 family. Requires Mg(2+) as cofactor. It depends on Mn(2+) as a cofactor.

It catalyses the reaction UTP + ATP = 3',3'-cUAMP + 2 diphosphate. In terms of biological role, nucleotidyltransferase that catalyzes the formation of cyclic UMP-AMP (3',3'-cUAMP) from ATP and UTP and plays a key role in innate immunity. Acts as a key sensor of double-stranded RNA (dsRNA), the presence of dsRNA in the cytoplasm being a danger signal that triggers the immune responses. Directly binds dsRNA, activating the nucleotidyltransferase activity, leading to synthesis of 3',3'-cUAMP, a second messenger that binds to and activates Sting, thereby triggering the immune response via activation of the NF-kappa-B transcription factor. The chain is Cyclic GMP-AMP synthase-like receptor 1 from Stylophora pistillata (Smooth cauliflower coral).